Reading from the N-terminus, the 203-residue chain is MTQNVVIIDTGCANISSVKFAIERLGYAVTISRDPQVVLAADKLFLPGVGTASEAMKNLTERDLIELVKRVEKPLLGICLGMQLLGKLSEEKGQKADEIVQCLGLVDGEVRLLQTGDLPLPHMGWNTVQVKEGHPLFNGIEPDAYFYFVHSFAMPVGDYTIAQCEYGQPFSAAIQAGNYYGVQFHPERSSKAGARLIQNFLEL.

Residues 4 to 203 enclose the Glutamine amidotransferase type-1 domain; that stretch reads NVVIIDTGCA…ARLIQNFLEL (200 aa). C79 serves as the catalytic Nucleophile. Residues H185 and E187 contribute to the active site.

In terms of assembly, heterodimer of HisH and HisF.

It localises to the cytoplasm. It catalyses the reaction 5-[(5-phospho-1-deoxy-D-ribulos-1-ylimino)methylamino]-1-(5-phospho-beta-D-ribosyl)imidazole-4-carboxamide + L-glutamine = D-erythro-1-(imidazol-4-yl)glycerol 3-phosphate + 5-amino-1-(5-phospho-beta-D-ribosyl)imidazole-4-carboxamide + L-glutamate + H(+). The catalysed reaction is L-glutamine + H2O = L-glutamate + NH4(+). It functions in the pathway amino-acid biosynthesis; L-histidine biosynthesis; L-histidine from 5-phospho-alpha-D-ribose 1-diphosphate: step 5/9. In terms of biological role, IGPS catalyzes the conversion of PRFAR and glutamine to IGP, AICAR and glutamate. The HisH subunit catalyzes the hydrolysis of glutamine to glutamate and ammonia as part of the synthesis of IGP and AICAR. The resulting ammonia molecule is channeled to the active site of HisF. The polypeptide is Imidazole glycerol phosphate synthase subunit HisH (hisH) (Vibrio cholerae serotype O1 (strain ATCC 39315 / El Tor Inaba N16961)).